Here is a 351-residue protein sequence, read N- to C-terminus: Phosphoribosylformylglycinamidine cyclo-ligase (351 aa).

It belongs to the AIR synthase family.

It localises to the cytoplasm. The enzyme catalyses 2-formamido-N(1)-(5-O-phospho-beta-D-ribosyl)acetamidine + ATP = 5-amino-1-(5-phospho-beta-D-ribosyl)imidazole + ADP + phosphate + H(+). It participates in purine metabolism; IMP biosynthesis via de novo pathway; 5-amino-1-(5-phospho-D-ribosyl)imidazole from N(2)-formyl-N(1)-(5-phospho-D-ribosyl)glycinamide: step 2/2. The polypeptide is Phosphoribosylformylglycinamidine cyclo-ligase (Burkholderia cenocepacia (strain HI2424)).